Consider the following 530-residue polypeptide: Bifunctional purine biosynthesis protein PurH (530 aa).

The 148-residue stretch at 1–148 (MNNPRPIRRA…KNHKDVTIVV (148 aa)) folds into the MGS-like domain.

Belongs to the PurH family.

It carries out the reaction (6R)-10-formyltetrahydrofolate + 5-amino-1-(5-phospho-beta-D-ribosyl)imidazole-4-carboxamide = 5-formamido-1-(5-phospho-D-ribosyl)imidazole-4-carboxamide + (6S)-5,6,7,8-tetrahydrofolate. The catalysed reaction is IMP + H2O = 5-formamido-1-(5-phospho-D-ribosyl)imidazole-4-carboxamide. It functions in the pathway purine metabolism; IMP biosynthesis via de novo pathway; 5-formamido-1-(5-phospho-D-ribosyl)imidazole-4-carboxamide from 5-amino-1-(5-phospho-D-ribosyl)imidazole-4-carboxamide (10-formyl THF route): step 1/1. Its pathway is purine metabolism; IMP biosynthesis via de novo pathway; IMP from 5-formamido-1-(5-phospho-D-ribosyl)imidazole-4-carboxamide: step 1/1. The polypeptide is Bifunctional purine biosynthesis protein PurH (Aliivibrio salmonicida (strain LFI1238) (Vibrio salmonicida (strain LFI1238))).